The sequence spans 214 residues: Dephospho-CoA kinase (214 aa).

Residues 20–214 (RIGITGGIAS…KLQLKKLYKF (195 aa)) enclose the DPCK domain. 28–33 (ASGKTI) contacts ATP.

The protein belongs to the CoaE family.

It localises to the cytoplasm. The catalysed reaction is 3'-dephospho-CoA + ATP = ADP + CoA + H(+). It functions in the pathway cofactor biosynthesis; coenzyme A biosynthesis; CoA from (R)-pantothenate: step 5/5. Catalyzes the phosphorylation of the 3'-hydroxyl group of dephosphocoenzyme A to form coenzyme A. The protein is Dephospho-CoA kinase of Prochlorococcus marinus (strain NATL2A).